The chain runs to 267 residues: Glucosamine-6-phosphate deaminase (267 aa).

Residue Asp72 is the Proton acceptor; for enolization step of the active site. Asp141 acts as the For ring-opening step in catalysis. The active-site Proton acceptor; for ring-opening step is the His143. The active-site For ring-opening step is the Glu148.

Belongs to the glucosamine/galactosamine-6-phosphate isomerase family. NagB subfamily. As to quaternary structure, homohexamer.

It carries out the reaction alpha-D-glucosamine 6-phosphate + H2O = beta-D-fructose 6-phosphate + NH4(+). The protein operates within amino-sugar metabolism; N-acetylneuraminate degradation; D-fructose 6-phosphate from N-acetylneuraminate: step 5/5. With respect to regulation, allosterically activated by N-acetylglucosamine 6-phosphate (GlcNAc6P). Functionally, catalyzes the reversible isomerization-deamination of glucosamine 6-phosphate (GlcN6P) to form fructose 6-phosphate (Fru6P) and ammonium ion. This Haemophilus ducreyi (strain 35000HP / ATCC 700724) protein is Glucosamine-6-phosphate deaminase.